The chain runs to 172 residues: Large ribosomal subunit protein uL10 (172 aa).

The protein belongs to the universal ribosomal protein uL10 family. Part of the ribosomal stalk of the 50S ribosomal subunit. The N-terminus interacts with L11 and the large rRNA to form the base of the stalk. The C-terminus forms an elongated spine to which L12 dimers bind in a sequential fashion forming a multimeric L10(L12)X complex.

Its function is as follows. Forms part of the ribosomal stalk, playing a central role in the interaction of the ribosome with GTP-bound translation factors. This Mesorhizobium japonicum (strain LMG 29417 / CECT 9101 / MAFF 303099) (Mesorhizobium loti (strain MAFF 303099)) protein is Large ribosomal subunit protein uL10.